Here is a 160-residue protein sequence, read N- to C-terminus: Major strawberry allergen Fra a 1.07 (160 aa).

Belongs to the BetVI family. Phosphorylated in vivo. Phosphorylation prevents its activity as ribonuclease. Highly expressed in roots. Expressed a low levels in ripe red fruits.

Its function is as follows. Possesses ribonuclease activity in vitro. This Fragaria ananassa (Strawberry) protein is Major strawberry allergen Fra a 1.07.